We begin with the raw amino-acid sequence, 466 residues long: Ribulose bisphosphate carboxylase large chain (466 aa).

Position 5 is an N6,N6,N6-trimethyllysine (Lys5). Positions 114 and 164 each coordinate substrate. Lys166 functions as the Proton acceptor in the catalytic mechanism. Position 168 (Lys168) interacts with substrate. 3 residues coordinate Mg(2+): Lys192, Asp194, and Glu195. Residue Lys192 is modified to N6-carboxylysine. The active-site Proton acceptor is the His285. Residues Arg286, His318, and Ser370 each coordinate substrate.

The protein belongs to the RuBisCO large chain family. Type I subfamily. As to quaternary structure, heterohexadecamer of 8 large chains and 8 small chains; disulfide-linked. The disulfide link is formed within the large subunit homodimers. Mg(2+) is required as a cofactor. In terms of processing, the disulfide bond which can form in the large chain dimeric partners within the hexadecamer appears to be associated with oxidative stress and protein turnover.

Its subcellular location is the plastid. It is found in the chloroplast. It catalyses the reaction 2 (2R)-3-phosphoglycerate + 2 H(+) = D-ribulose 1,5-bisphosphate + CO2 + H2O. The catalysed reaction is D-ribulose 1,5-bisphosphate + O2 = 2-phosphoglycolate + (2R)-3-phosphoglycerate + 2 H(+). In terms of biological role, ruBisCO catalyzes two reactions: the carboxylation of D-ribulose 1,5-bisphosphate, the primary event in carbon dioxide fixation, as well as the oxidative fragmentation of the pentose substrate in the photorespiration process. Both reactions occur simultaneously and in competition at the same active site. The polypeptide is Ribulose bisphosphate carboxylase large chain (Drosera capensis (Cape sundew)).